The sequence spans 804 residues: DNA gyrase subunit A (804 aa).

A Topo IIA-type catalytic domain is found at 31–495; that stretch reads IPDVRDGLKP…QSIEYNEEEL (465 aa). The active-site O-(5'-phospho-DNA)-tyrosine intermediate is Y119. The short motif at 522–528 is the GyrA-box element; it reads QKRGGKG.

The protein belongs to the type II topoisomerase GyrA/ParC subunit family. In terms of assembly, heterotetramer, composed of two GyrA and two GyrB chains. In the heterotetramer, GyrA contains the active site tyrosine that forms a transient covalent intermediate with DNA, while GyrB binds cofactors and catalyzes ATP hydrolysis.

The protein resides in the cytoplasm. The enzyme catalyses ATP-dependent breakage, passage and rejoining of double-stranded DNA.. Its function is as follows. A type II topoisomerase that negatively supercoils closed circular double-stranded (ds) DNA in an ATP-dependent manner to modulate DNA topology and maintain chromosomes in an underwound state. Negative supercoiling favors strand separation, and DNA replication, transcription, recombination and repair, all of which involve strand separation. Also able to catalyze the interconversion of other topological isomers of dsDNA rings, including catenanes and knotted rings. Type II topoisomerases break and join 2 DNA strands simultaneously in an ATP-dependent manner. The polypeptide is DNA gyrase subunit A (Thermotoga maritima (strain ATCC 43589 / DSM 3109 / JCM 10099 / NBRC 100826 / MSB8)).